The sequence spans 138 residues: DNA-directed RNA polymerase subunit omega (138 aa).

Belongs to the RNA polymerase subunit omega family. As to quaternary structure, the RNAP catalytic core consists of 2 alpha, 1 beta, 1 beta' and 1 omega subunit. When a sigma factor is associated with the core the holoenzyme is formed, which can initiate transcription.

The catalysed reaction is RNA(n) + a ribonucleoside 5'-triphosphate = RNA(n+1) + diphosphate. Its function is as follows. Promotes RNA polymerase assembly. Latches the N- and C-terminal regions of the beta' subunit thereby facilitating its interaction with the beta and alpha subunits. The polypeptide is DNA-directed RNA polymerase subunit omega (Thermodesulfovibrio yellowstonii (strain ATCC 51303 / DSM 11347 / YP87)).